We begin with the raw amino-acid sequence, 204 residues long: dITP/XTP pyrophosphatase (204 aa).

Position 14-19 (14-19 (THNKGK)) interacts with substrate. Residues Glu-46 and Asp-75 each coordinate Mg(2+). Asp-75 serves as the catalytic Proton acceptor. Residues Ser-76, 161-164 (FGYD), Lys-184, and 189-190 (HR) each bind substrate.

It belongs to the HAM1 NTPase family. As to quaternary structure, homodimer. The cofactor is Mg(2+).

The enzyme catalyses XTP + H2O = XMP + diphosphate + H(+). It carries out the reaction dITP + H2O = dIMP + diphosphate + H(+). The catalysed reaction is ITP + H2O = IMP + diphosphate + H(+). In terms of biological role, pyrophosphatase that catalyzes the hydrolysis of nucleoside triphosphates to their monophosphate derivatives, with a high preference for the non-canonical purine nucleotides XTP (xanthosine triphosphate), dITP (deoxyinosine triphosphate) and ITP. Seems to function as a house-cleaning enzyme that removes non-canonical purine nucleotides from the nucleotide pool, thus preventing their incorporation into DNA/RNA and avoiding chromosomal lesions. This Ruegeria pomeroyi (strain ATCC 700808 / DSM 15171 / DSS-3) (Silicibacter pomeroyi) protein is dITP/XTP pyrophosphatase.